A 250-amino-acid chain; its full sequence is MSYQVEVCIDNIESLHNALEGGATRIELCSSLALGGLTPSYGFMTLAAKLSTVPIYAMIRPRQGDFLYSDDEFAIMQQDILSAQQAGLQGVVFGLLTADGDIDVARTRILVELAHSLQLGVTFHRAFDQCREPFAALEQIIDLGCERILTSGLAASAPLGKEILTQLVAHSQSRLAIMAGAGVSPVNVADLALTTGVKEVHLSGKSTRPSKMTFIASDSKMGAADQDDFIIPITHTATIRNTVLALKSIS.

The protein belongs to the CutC family.

The protein resides in the cytoplasm. The protein is PF03932 family protein CutC of Vibrio vulnificus (strain CMCP6).